A 379-amino-acid chain; its full sequence is Mannitol-1-phosphate 5-dehydrogenase (379 aa).

3-14 (ALHFGAGNIGRG) lines the NAD(+) pocket.

It belongs to the mannitol dehydrogenase family.

The catalysed reaction is D-mannitol 1-phosphate + NAD(+) = beta-D-fructose 6-phosphate + NADH + H(+). This Actinobacillus pleuropneumoniae serotype 3 (strain JL03) protein is Mannitol-1-phosphate 5-dehydrogenase.